A 329-amino-acid chain; its full sequence is T-lymphocyte activation antigen CD86 (329 aa).

The first 23 residues, methionine 1–alanine 23, serve as a signal peptide directing secretion. At alanine 24 to proline 247 the chain is on the extracellular side. N-linked (GlcNAc...) asparagine glycans are attached at residues asparagine 33, asparagine 47, asparagine 135, asparagine 146, asparagine 154, asparagine 177, asparagine 192, and asparagine 213. The region spanning asparagine 33–serine 131 is the Ig-like V-type domain. Cysteines 40 and 110 form a disulfide. Residues asparagine 150–threonine 225 enclose the Ig-like C2-type domain. A disulfide bridge links cysteine 157 with cysteine 218. Residues tryptophan 248–tryptophan 268 form a helical membrane-spanning segment. The Cytoplasmic portion of the chain corresponds to lysine 269–phenylalanine 329. Positions arginine 277–phenylalanine 329 are disordered. The span at methionine 287–arginine 312 shows a compositional bias: basic and acidic residues.

In terms of assembly, homodimer. Interacts with MARCH8. Interacts (via cytoplasmic domain) with PHB1 and PHB2; the interactions increases after priming with CD40. Interacts with CD28. As to quaternary structure, (Microbial infection) Interacts with adenovirus subgroup b fiber protein. (Microbial infection) Interacts with Orthopoxvirus OPG038/M2 protein, inhibiting the interaction with CTLA4 and CD28. Polyubiquitinated; which is promoted by MARCH8 and results in endocytosis and lysosomal degradation. Expressed by activated B-lymphocytes and monocytes.

The protein localises to the cell membrane. In terms of biological role, receptor involved in the costimulatory signal essential for T-lymphocyte proliferation and interleukin-2 production, by binding CD28 or CTLA-4. May play a critical role in the early events of T-cell activation and costimulation of naive T-cells, such as deciding between immunity and anergy that is made by T-cells within 24 hours after activation. Also involved in the regulation of B cells function, plays a role in regulating the level of IgG(1) produced. Upon CD40 engagement, activates NF-kappa-B signaling pathway via phospholipase C and protein kinase C activation. Its function is as follows. Interferes with the formation of CD86 clusters, and thus acts as a negative regulator of T-cell activation. (Microbial infection) Acts as a receptor for adenovirus subgroup B. In Homo sapiens (Human), this protein is T-lymphocyte activation antigen CD86 (CD86).